Here is a 388-residue protein sequence, read N- to C-terminus: Mannitol-1-phosphate 5-dehydrogenase (388 aa).

Position 3-14 (3-14) interacts with NAD(+); the sequence is ALHFGAGNIGRG.

It belongs to the mannitol dehydrogenase family.

The enzyme catalyses D-mannitol 1-phosphate + NAD(+) = beta-D-fructose 6-phosphate + NADH + H(+). In Buchnera aphidicola subsp. Schizaphis graminum (strain Sg), this protein is Mannitol-1-phosphate 5-dehydrogenase.